The following is a 580-amino-acid chain: Long-chain-fatty-acid--AMP ligase FadD28 (580 aa).

Residues 421-440 (SERTFGGKIVTPSPGTPEGP) form a disordered region.

This sequence belongs to the ATP-dependent AMP-binding enzyme family.

It carries out the reaction holo-[mycocerosate synthase] + a long-chain fatty acid + ATP = a long-chain fatty acyl-[mycocerosate synthase] + AMP + diphosphate. The enzyme catalyses a long-chain fatty acid + ATP + H(+) = a long-chain fatty acyl-AMP + diphosphate. It catalyses the reaction holo-[mycocerosate synthase] + a long-chain fatty acyl-AMP = a long-chain fatty acyl-[mycocerosate synthase] + AMP + H(+). The protein operates within lipid metabolism; fatty acid biosynthesis. Functionally, involved in the biosynthesis of phthiocerol dimycocerosate (PDIM), a cell wall-associated lipid found only in pathogenic mycobacteria. Catalyzes the activation of long-chain fatty acids as acyl-adenylates (acyl-AMP), which are then transferred to the multifunctional polyketide synthase Mas for further chain extension. This chain is Long-chain-fatty-acid--AMP ligase FadD28 (fadD28), found in Mycobacterium tuberculosis (strain CDC 1551 / Oshkosh).